Reading from the N-terminus, the 513-residue chain is ATP synthase subunit alpha 1 (513 aa).

169–176 (GDRQCGKT) provides a ligand contact to ATP.

The protein belongs to the ATPase alpha/beta chains family. As to quaternary structure, F-type ATPases have 2 components, CF(1) - the catalytic core - and CF(0) - the membrane proton channel. CF(1) has five subunits: alpha(3), beta(3), gamma(1), delta(1), epsilon(1). CF(0) has three main subunits: a(1), b(2) and c(9-12). The alpha and beta chains form an alternating ring which encloses part of the gamma chain. CF(1) is attached to CF(0) by a central stalk formed by the gamma and epsilon chains, while a peripheral stalk is formed by the delta and b chains.

It is found in the cell inner membrane. The catalysed reaction is ATP + H2O + 4 H(+)(in) = ADP + phosphate + 5 H(+)(out). In terms of biological role, produces ATP from ADP in the presence of a proton gradient across the membrane. The alpha chain is a regulatory subunit. The polypeptide is ATP synthase subunit alpha 1 (Burkholderia thailandensis (strain ATCC 700388 / DSM 13276 / CCUG 48851 / CIP 106301 / E264)).